The primary structure comprises 481 residues: Pyruvate kinase (481 aa).

R36 is a substrate binding site. Residues N38, S40, and D70 each coordinate K(+). 38-41 (NFSH) is a binding site for ATP. The ATP site is built by R77 and K160. Mg(2+) is bound at residue E225. Substrate is bound by residues G251, D252, and T284. D252 lines the Mg(2+) pocket.

Belongs to the pyruvate kinase family. As to quaternary structure, homotetramer. Mg(2+) is required as a cofactor. It depends on K(+) as a cofactor.

It carries out the reaction pyruvate + ATP = phosphoenolpyruvate + ADP + H(+). Its pathway is carbohydrate degradation; glycolysis; pyruvate from D-glyceraldehyde 3-phosphate: step 5/5. With respect to regulation, allosterically activated by AMP and by several sugar phosphates. Belongs to type II PK. The chain is Pyruvate kinase (pykA) from Buchnera aphidicola subsp. Schizaphis graminum (strain Sg).